Reading from the N-terminus, the 289-residue chain is Phosphatidylglycerol--prolipoprotein diacylglyceryl transferase (289 aa).

The next 4 helical transmembrane spans lie at 21–41 (IGPL…LLGI), 53–73 (IDPN…IPAA), 95–115 (IWHG…ALIL), and 122–142 (IPIW…QAIG). R143 is an a 1,2-diacyl-sn-glycero-3-phospho-(1'-sn-glycerol) binding site. A run of 3 helical transmembrane segments spans residues 182 to 202 (PTFL…IWLF), 215 to 235 (GVMT…IEGL), and 247 to 267 (IAQM…VWIY).

Belongs to the Lgt family.

It localises to the cell inner membrane. The enzyme catalyses L-cysteinyl-[prolipoprotein] + a 1,2-diacyl-sn-glycero-3-phospho-(1'-sn-glycerol) = an S-1,2-diacyl-sn-glyceryl-L-cysteinyl-[prolipoprotein] + sn-glycerol 1-phosphate + H(+). Its pathway is protein modification; lipoprotein biosynthesis (diacylglyceryl transfer). Catalyzes the transfer of the diacylglyceryl group from phosphatidylglycerol to the sulfhydryl group of the N-terminal cysteine of a prolipoprotein, the first step in the formation of mature lipoproteins. The sequence is that of Phosphatidylglycerol--prolipoprotein diacylglyceryl transferase from Synechococcus elongatus (strain ATCC 33912 / PCC 7942 / FACHB-805) (Anacystis nidulans R2).